The chain runs to 653 residues: Chaperone protein DnaK (653 aa).

Residue Thr200 is modified to Phosphothreonine; by autocatalysis. The tract at residues Ala615–Asp653 is disordered. Gly residues predominate over residues Ala623–Ala632.

The protein belongs to the heat shock protein 70 family.

Acts as a chaperone. The protein is Chaperone protein DnaK of Paraburkholderia xenovorans (strain LB400).